A 394-amino-acid polypeptide reads, in one-letter code: Elongation factor Tu (394 aa).

Residues 10–204 (KPHVNIGTIG…AVDSYIPQPV (195 aa)) form the tr-type G domain. A G1 region spans residues 19–26 (GHVDHGKT). 19 to 26 (GHVDHGKT) is a GTP binding site. A Mg(2+)-binding site is contributed by threonine 26. The interval 60–64 (GITIS) is G2. Residues 81–84 (DCPG) are G3. Residues 81 to 85 (DCPGH) and 136 to 139 (NKID) contribute to the GTP site. The interval 136 to 139 (NKID) is G4. The segment at 174 to 176 (SAL) is G5.

Belongs to the TRAFAC class translation factor GTPase superfamily. Classic translation factor GTPase family. EF-Tu/EF-1A subfamily. In terms of assembly, monomer.

The protein localises to the cytoplasm. It carries out the reaction GTP + H2O = GDP + phosphate + H(+). Functionally, GTP hydrolase that promotes the GTP-dependent binding of aminoacyl-tRNA to the A-site of ribosomes during protein biosynthesis. The sequence is that of Elongation factor Tu from Rickettsia rickettsii.